A 201-amino-acid polypeptide reads, in one-letter code: MKTYRDHYFLKAKQENYPARSIYKLKEIDNRFKLFRQGMKVLDLGAAPGSWSLGAAERVGPKGRVLACDLQTTDTQFPPNVTFMQEDVFNRSEAFEDALAAMGPFHVVISDMAPRTTGTRFTDQARSLELCIEALAVADHCLIKGGSFVVKIFMGPDVKQLLDALRARFETVKTFKPKSSRVESKETFYVCLGYRGDGQQD.

Residues glycine 49, tryptophan 51, aspartate 69, aspartate 87, and aspartate 111 each coordinate S-adenosyl-L-methionine. Residue lysine 151 is the Proton acceptor of the active site.

Belongs to the class I-like SAM-binding methyltransferase superfamily. RNA methyltransferase RlmE family.

Its subcellular location is the cytoplasm. It carries out the reaction uridine(2552) in 23S rRNA + S-adenosyl-L-methionine = 2'-O-methyluridine(2552) in 23S rRNA + S-adenosyl-L-homocysteine + H(+). In terms of biological role, specifically methylates the uridine in position 2552 of 23S rRNA at the 2'-O position of the ribose in the fully assembled 50S ribosomal subunit. This Nitratidesulfovibrio vulgaris (strain DSM 19637 / Miyazaki F) (Desulfovibrio vulgaris) protein is Ribosomal RNA large subunit methyltransferase E.